The following is a 473-amino-acid chain: Cysteine--tRNA ligase (473 aa).

C28 provides a ligand contact to Zn(2+). The 'HIGH' region signature appears at 30-40; it reads MTVYDFCHIGH. Residues C212, H237, and E241 each contribute to the Zn(2+) site. The short motif at 277–281 is the 'KMSKS' region element; it reads KMSKS. Position 280 (K280) interacts with ATP.

It belongs to the class-I aminoacyl-tRNA synthetase family. Monomer. Zn(2+) serves as cofactor.

It is found in the cytoplasm. It catalyses the reaction tRNA(Cys) + L-cysteine + ATP = L-cysteinyl-tRNA(Cys) + AMP + diphosphate. This Polynucleobacter asymbioticus (strain DSM 18221 / CIP 109841 / QLW-P1DMWA-1) (Polynucleobacter necessarius subsp. asymbioticus) protein is Cysteine--tRNA ligase.